The following is an 86-amino-acid chain: Translation initiation factor IF-1 3 (86 aa).

In terms of domain architecture, S1-like spans 1 to 72 (MAKEELIEMQ…NKGRVTFRHI (72 aa)).

This sequence belongs to the IF-1 family. Component of the 30S ribosomal translation pre-initiation complex which assembles on the 30S ribosome in the order IF-2 and IF-3, IF-1 and N-formylmethionyl-tRNA(fMet); mRNA recruitment can occur at any time during PIC assembly.

The protein resides in the cytoplasm. In terms of biological role, one of the essential components for the initiation of protein synthesis. Stabilizes the binding of IF-2 and IF-3 on the 30S subunit to which N-formylmethionyl-tRNA(fMet) subsequently binds. Helps modulate mRNA selection, yielding the 30S pre-initiation complex (PIC). Upon addition of the 50S ribosomal subunit IF-1, IF-2 and IF-3 are released leaving the mature 70S translation initiation complex. This is Translation initiation factor IF-1 3 from Acidovorax sp. (strain JS42).